The chain runs to 124 residues: Ribonuclease pancreatic (124 aa).

Over residues Ser-1–Met-13 the composition is skewed to basic and acidic residues. A disordered region spans residues Ser-1–Ser-23. Substrate contacts are provided by Lys-7 and Arg-10. The active-site Proton acceptor is His-12. Intrachain disulfides connect Cys-26/Cys-84, Cys-40/Cys-95, Cys-58/Cys-110, and Cys-65/Cys-72. Residues Lys-41–Thr-45, Lys-66, and Arg-85 contribute to the substrate site. His-119 functions as the Proton donor in the catalytic mechanism.

This sequence belongs to the pancreatic ribonuclease family. Monomer. Interacts with and forms tight 1:1 complexes with RNH1. Dimerization of two such complexes may occur. Interaction with RNH1 inhibits this protein. In terms of tissue distribution, pancreas.

Its subcellular location is the secreted. It carries out the reaction an [RNA] containing cytidine + H2O = an [RNA]-3'-cytidine-3'-phosphate + a 5'-hydroxy-ribonucleotide-3'-[RNA].. The enzyme catalyses an [RNA] containing uridine + H2O = an [RNA]-3'-uridine-3'-phosphate + a 5'-hydroxy-ribonucleotide-3'-[RNA].. Its function is as follows. Endonuclease that catalyzes the cleavage of RNA on the 3' side of pyrimidine nucleotides. Acts on single-stranded and double-stranded RNA. This is Ribonuclease pancreatic (RNASE1) from Camelus bactrianus (Bactrian camel).